The primary structure comprises 371 residues: MSFELLATDGKARRGRLTFPRGVVETPAFMPVGTYGTVKGMLPRDIEATGAQMILGNTFHLWLRPGTEVIKGHGDLHDFMQWKGPILTDSGGFQVFSLGAMRKIKEEGVTFASPVDGAKVFMGPEESMQVQRDLGSDVVMIFDECTPYPADEDVARVSMELSLRWAKRSKVAHGENTAALFGIVQGGMHENLRKRSLEGLDEIGFDGLAIGGLSVGEPKHEMIKVLDYLPGLMPADKPRYLMGVGKPEDLVEGVRRGVDMFDCVMPTRNARNGHLFIDTGVLKIRNAFHRHDNTPLDPTCDCYTCKNFSRAYLHHLDKCGEMLGSMLNTIHNLRHYQLLMAGLREAIQQGTLAAFVDAFYAKRGLPTPPLG.

The active-site Proton acceptor is Asp89. Residues 89–93 (DSGGF), Asp143, Gln185, and Gly212 contribute to the substrate site. The segment at 243–249 (GVGKPED) is RNA binding. Asp262 serves as the catalytic Nucleophile. Residues 267-271 (TRNAR) form an RNA binding; important for wobble base 34 recognition region. Residues Cys300, Cys302, Cys305, and His331 each coordinate Zn(2+).

Belongs to the queuine tRNA-ribosyltransferase family. Homodimer. Within each dimer, one monomer is responsible for RNA recognition and catalysis, while the other monomer binds to the replacement base PreQ1. Requires Zn(2+) as cofactor.

It carries out the reaction 7-aminomethyl-7-carbaguanine + guanosine(34) in tRNA = 7-aminomethyl-7-carbaguanosine(34) in tRNA + guanine. The protein operates within tRNA modification; tRNA-queuosine biosynthesis. Functionally, catalyzes the base-exchange of a guanine (G) residue with the queuine precursor 7-aminomethyl-7-deazaguanine (PreQ1) at position 34 (anticodon wobble position) in tRNAs with GU(N) anticodons (tRNA-Asp, -Asn, -His and -Tyr). Catalysis occurs through a double-displacement mechanism. The nucleophile active site attacks the C1' of nucleotide 34 to detach the guanine base from the RNA, forming a covalent enzyme-RNA intermediate. The proton acceptor active site deprotonates the incoming PreQ1, allowing a nucleophilic attack on the C1' of the ribose to form the product. After dissociation, two additional enzymatic reactions on the tRNA convert PreQ1 to queuine (Q), resulting in the hypermodified nucleoside queuosine (7-(((4,5-cis-dihydroxy-2-cyclopenten-1-yl)amino)methyl)-7-deazaguanosine). In Pseudomonas syringae pv. tomato (strain ATCC BAA-871 / DC3000), this protein is Queuine tRNA-ribosyltransferase.